The chain runs to 269 residues: Regulating synaptic membrane exocytosis protein 4 (269 aa).

One can recognise a C2 domain in the interval 115 to 233 (PMGDVEIGLQ…DLTTLAVGWY (119 aa)). Phosphoserine occurs at positions 254 and 257.

Binds PPFIA3. Does not bind RAB3.

The protein localises to the synapse. Regulates synaptic membrane exocytosis. The sequence is that of Regulating synaptic membrane exocytosis protein 4 (Rims4) from Mus musculus (Mouse).